The sequence spans 340 residues: L-threonine 3-dehydrogenase (340 aa).

Zn(2+) is bound at residue C38. Residues T40 and H43 each act as charge relay system in the active site. Zn(2+) contacts are provided by H63, E64, C93, C96, C99, and C107. NAD(+)-binding positions include I175, D195, R200, 262–264 (LGI), and 286–287 (IY).

It belongs to the zinc-containing alcohol dehydrogenase family. In terms of assembly, homotetramer. It depends on Zn(2+) as a cofactor.

The protein localises to the cytoplasm. The enzyme catalyses L-threonine + NAD(+) = (2S)-2-amino-3-oxobutanoate + NADH + H(+). It functions in the pathway amino-acid degradation; L-threonine degradation via oxydo-reductase pathway; glycine from L-threonine: step 1/2. Functionally, catalyzes the NAD(+)-dependent oxidation of L-threonine to 2-amino-3-ketobutyrate. In Pseudoalteromonas atlantica (strain T6c / ATCC BAA-1087), this protein is L-threonine 3-dehydrogenase.